The following is a 338-amino-acid chain: HTH-type transcriptional regulator SyrM 1 (338 aa).

Positions 35–92 (LDLNTLLALEALLEHRNVTQAARHLGLSQPSVSRALIRLRGVFNDDLLVRGSSGMVPT) constitute an HTH lysR-type domain. A DNA-binding region (H-T-H motif) is located at residues 52 to 72 (VTQAARHLGLSQPSVSRALIR).

Belongs to the LysR transcriptional regulatory family.

In terms of biological role, transcriptional activator that regulates the expression of genes involved in symbiosis. Among other targets it acts on the nolWBTUV operon. The sequence is that of HTH-type transcriptional regulator SyrM 1 (syrM1) from Sinorhizobium fredii (strain NBRC 101917 / NGR234).